A 20-amino-acid polypeptide reads, in one-letter code: L-amino-acid oxidase L1 (20 aa).

It belongs to the flavin monoamine oxidase family. FIG1 subfamily. As to quaternary structure, monomer. This is in contrast with most of its orthologs, that are non-covalently linked homodimers. Requires FAD as cofactor. In terms of processing, N-glycosylated. As to expression, expressed by the venom gland.

It localises to the secreted. The enzyme catalyses an L-alpha-amino acid + O2 + H2O = a 2-oxocarboxylate + H2O2 + NH4(+). It carries out the reaction L-leucine + O2 + H2O = 4-methyl-2-oxopentanoate + H2O2 + NH4(+). The catalysed reaction is L-phenylalanine + O2 + H2O = 3-phenylpyruvate + H2O2 + NH4(+). It catalyses the reaction L-tryptophan + O2 + H2O = indole-3-pyruvate + H2O2 + NH4(+). The enzyme catalyses L-methionine + O2 + H2O = 4-methylsulfanyl-2-oxobutanoate + H2O2 + NH4(+). It carries out the reaction L-isoleucine + O2 + H2O = (S)-3-methyl-2-oxopentanoate + H2O2 + NH4(+). The catalysed reaction is L-tyrosine + O2 + H2O = 3-(4-hydroxyphenyl)pyruvate + H2O2 + NH4(+). In terms of biological role, catalyzes an oxidative deamination of predominantly hydrophobic and aromatic L-amino acids, thus producing hydrogen peroxide that may contribute to the diverse toxic effects of this enzyme. Is active on L-Met, L-Ile, L-Leu, L-Phe, L-Trp, and L-Tyr. Exhibits diverse biological activities, such as hemorrhage, hemolysis, edema, apoptosis of vascular endothelial cells or tumor cell lines, antibacterial and antiparasitic activities, as well as regulation of platelet aggregation. Its effect on platelets is controversial, since it either induces aggregation or inhibits agonist-induced aggregation. These different effects are probably due to different experimental conditions. This is L-amino-acid oxidase L1 from Daboia russelii (Russel's viper).